Here is a 258-residue protein sequence, read N- to C-terminus: 2-succinyl-6-hydroxy-2,4-cyclohexadiene-1-carboxylate synthase (258 aa).

It belongs to the AB hydrolase superfamily. MenH family. As to quaternary structure, monomer.

The enzyme catalyses 5-enolpyruvoyl-6-hydroxy-2-succinyl-cyclohex-3-ene-1-carboxylate = (1R,6R)-6-hydroxy-2-succinyl-cyclohexa-2,4-diene-1-carboxylate + pyruvate. The protein operates within quinol/quinone metabolism; 1,4-dihydroxy-2-naphthoate biosynthesis; 1,4-dihydroxy-2-naphthoate from chorismate: step 3/7. It participates in quinol/quinone metabolism; menaquinone biosynthesis. In terms of biological role, catalyzes a proton abstraction reaction that results in 2,5-elimination of pyruvate from 2-succinyl-5-enolpyruvyl-6-hydroxy-3-cyclohexene-1-carboxylate (SEPHCHC) and the formation of 2-succinyl-6-hydroxy-2,4-cyclohexadiene-1-carboxylate (SHCHC). The polypeptide is 2-succinyl-6-hydroxy-2,4-cyclohexadiene-1-carboxylate synthase (Enterobacter sp. (strain 638)).